The chain runs to 338 residues: Glyceraldehyde-3-phosphate dehydrogenase (338 aa).

NAD(+) is bound by residues 12–13 (RI), Asp-34, and Arg-79. D-glyceraldehyde 3-phosphate is bound by residues 150-152 (SCT), Thr-181, 210-211 (TG), and Arg-233. Catalysis depends on Cys-151, which acts as the Nucleophile. An NAD(+)-binding site is contributed by Asn-315.

It belongs to the glyceraldehyde-3-phosphate dehydrogenase family. In terms of assembly, homotetramer.

The protein localises to the cytoplasm. The catalysed reaction is D-glyceraldehyde 3-phosphate + phosphate + NAD(+) = (2R)-3-phospho-glyceroyl phosphate + NADH + H(+). It functions in the pathway carbohydrate degradation; glycolysis; pyruvate from D-glyceraldehyde 3-phosphate: step 1/5. The polypeptide is Glyceraldehyde-3-phosphate dehydrogenase (gpd1) (Hypocrea atroviridis (Trichoderma atroviride)).